The following is a 186-amino-acid chain: Imidazole glycerol phosphate synthase subunit HisH (186 aa).

The Glutamine amidotransferase type-1 domain occupies 1–186 (MIAIIDYGSG…KLLRNFGELA (186 aa)). The Nucleophile role is filled by C72. Catalysis depends on residues H167 and E169.

As to quaternary structure, heterodimer of HisH and HisF.

The protein resides in the cytoplasm. The enzyme catalyses 5-[(5-phospho-1-deoxy-D-ribulos-1-ylimino)methylamino]-1-(5-phospho-beta-D-ribosyl)imidazole-4-carboxamide + L-glutamine = D-erythro-1-(imidazol-4-yl)glycerol 3-phosphate + 5-amino-1-(5-phospho-beta-D-ribosyl)imidazole-4-carboxamide + L-glutamate + H(+). The catalysed reaction is L-glutamine + H2O = L-glutamate + NH4(+). It participates in amino-acid biosynthesis; L-histidine biosynthesis; L-histidine from 5-phospho-alpha-D-ribose 1-diphosphate: step 5/9. Functionally, IGPS catalyzes the conversion of PRFAR and glutamine to IGP, AICAR and glutamate. The HisH subunit catalyzes the hydrolysis of glutamine to glutamate and ammonia as part of the synthesis of IGP and AICAR. The resulting ammonia molecule is channeled to the active site of HisF. The protein is Imidazole glycerol phosphate synthase subunit HisH of Picrophilus torridus (strain ATCC 700027 / DSM 9790 / JCM 10055 / NBRC 100828 / KAW 2/3).